We begin with the raw amino-acid sequence, 64 residues long: Translational regulator CsrA (64 aa).

It belongs to the CsrA/RsmA family. As to quaternary structure, homodimer; the beta-strands of each monomer intercalate to form a hydrophobic core, while the alpha-helices form wings that extend away from the core.

It is found in the cytoplasm. Its function is as follows. A key translational regulator that binds mRNA to regulate translation initiation and/or mRNA stability. Mediates global changes in gene expression, shifting from rapid growth to stress survival by linking envelope stress, the stringent response and the catabolite repression systems. Usually binds in the 5'-UTR; binding at or near the Shine-Dalgarno sequence prevents ribosome-binding, repressing translation, binding elsewhere in the 5'-UTR can activate translation and/or stabilize the mRNA. Its function is antagonized by small RNA(s). This chain is Translational regulator CsrA, found in Actinobacillus pleuropneumoniae serotype 5b (strain L20).